The primary structure comprises 535 residues: Alpha-1,3-mannosyl-glycoprotein 4-beta-N-acetylglucosaminyltransferase A (535 aa).

Residues 1–6 (MRLRNG) are Cytoplasmic-facing. A helical; Signal-anchor for type II membrane protein membrane pass occupies residues 7–27 (TVATALVFVTSFLTLSWYTTW). Positions 28–63 (QNGKEKLIAYQREFLALKERLRVAEHRISQRSSELN) form a coiled coil. Residues 28-535 (QNGKEKLIAY…NEIHIKKVTS (508 aa)) are Lumenal-facing. N-linked (GlcNAc...) asparagine glycans are attached at residues N77 and N458. Residue S474 is modified to Phosphoserine.

Belongs to the glycosyltransferase 54 family. It depends on a divalent metal cation as a cofactor. Post-translationally, N-glycosylated.

It localises to the golgi apparatus membrane. The protein resides in the secreted. The catalysed reaction is N(4)-{beta-D-GlcNAc-(1-&gt;2)-alpha-D-Man-(1-&gt;3)-[beta-D-GlcNAc-(1-&gt;2)-alpha-D-Man-(1-&gt;6)]-beta-D-Man-(1-&gt;4)-beta-D-GlcNAc-(1-&gt;4)-beta-D-GlcNAc}-L-asparaginyl-[protein] + UDP-N-acetyl-alpha-D-glucosamine = N(4)-{beta-D-GlcNAc-(1-&gt;2)-[beta-D-GlcNAc-(1-&gt;4)]-alpha-D-Man-(1-&gt;3)-[beta-D-GlcNAc-(1-&gt;2)-alpha-D-Man-(1-&gt;6)]-beta-D-Man-(1-&gt;4)-beta-D-GlcNAc-(1-&gt;4)-beta-D-GlcNAc}-L-asparaginyl-[protein] + UDP + H(+). It catalyses the reaction an N(4)-{beta-D-GlcNAc-(1-&gt;2)-alpha-D-Man-(1-&gt;3)-[alpha-D-Man-(1-&gt;6)]-beta-D-Man-(1-&gt;4)-beta-D-GlcNAc-(1-&gt;4)-beta-D-GlcNAc}-L-asparaginyl-[protein] + UDP-N-acetyl-alpha-D-glucosamine = an N(4)-{beta-D-GlcNAc-(1-&gt;2)-[beta-D-GlcNAc-(1-&gt;4)]-alpha-D-Man-(1-&gt;3)-[alpha-D-Man-(1-&gt;6)]-beta-D-Man-(1-&gt;4)-beta-D-GlcNAc-(1-&gt;4)-beta-D-GlcNAc}-L-asparaginyl-[protein] + UDP + H(+). The enzyme catalyses an N(4)-{beta-D-GlcNAc-(1-&gt;2)-alpha-D-Man-(1-&gt;3)-[beta-D-GlcNAc-(1-&gt;2)-[beta-D-GlcNAc-(1-&gt;6)]-alpha-D-Man-(1-&gt;6)]-beta-D-Man-(1-&gt;4)-beta-D-GlcNAc-(1-&gt;4)-beta-D-GlcNAc}-L-asparaginyl-[protein] + UDP-N-acetyl-alpha-D-glucosamine = an N(4)-{beta-D-GlcNAc-(1-&gt;2)-[beta-D-GlcNAc-(1-&gt;4)]-alpha-D-Man-(1-&gt;3)-[beta-D-GlcNAc-(1-&gt;2)-[beta-D-GlcNAc-(1-&gt;6)]-alpha-D-Man-(1-&gt;6)]-beta-D-Man-(1-&gt;4)-beta-D-GlcNAc-(1-&gt;4)-beta-D-GlcNAc}-L-asparaginyl-[protein] + UDP + H(+). It carries out the reaction an N(4)-{beta-D-GlcNAc-(1-&gt;2)-alpha-D-Man-(1-&gt;3)-[beta-D-GlcNAc-(1-&gt;2)-alpha-D-Man-(1-&gt;6)]-beta-D-Man-(1-&gt;4)-beta-D-GlcNAc-(1-&gt;4)-[alpha-L-Fuc-(1-&gt;6)]-beta-D-GlcNAc}-L-asparaginyl-[protein] + UDP-N-acetyl-alpha-D-glucosamine = N(4)-{beta-D-GlcNAc-(1-&gt;2)-[beta-D-GlcNAc-(1-&gt;4)]-alpha-D-Man-(1-&gt;3)-[beta-D-GlcNAc-(1-&gt;2)-alpha-D-Man-(1-&gt;6)]-beta-D-Man-(1-&gt;4)-beta-D-GlcNAc-(1-&gt;4)-[alpha-L-Fuc-(1-&gt;6)]-beta-D-GlcNAc}-asparaginyl-[protein] + UDP + H(+). The catalysed reaction is an N(4)-{beta-D-GlcNAc-(1-&gt;2)-alpha-D-Man-(1-&gt;3)-[beta-D-Gal-(1-&gt;4)-beta-D-GlcNAc-(1-&gt;2)-alpha-D-Man-(1-&gt;6)]-beta-D-Man-(1-&gt;4)-beta-D-GlcNAc-(1-&gt;4)-beta-D-GlcNAc}-L-asparaginyl-[protein] + UDP-N-acetyl-alpha-D-glucosamine = an N(4)-{beta-D-GlcNAc-(1-&gt;2)-[beta-D-GlcNAc-(1-&gt;4)]-alpha-D-Man-(1-&gt;3)-[beta-D-Gal-(1-&gt;4)-beta-D-GlcNAc-(1-&gt;2)-alpha-D-Man-(1-&gt;6)]-beta-D-Man-(1-&gt;4)-beta-D-GlcNAc-(1-&gt;4)-beta-D-GlcNAc}-L-asparaginyl-[protein] + UDP + H(+). It catalyses the reaction N(4)-{beta-D-GlcNAc-(1-&gt;2)-alpha-D-Man-(1-&gt;3)-[alpha-D-Man-(1-&gt;3)-{alpha-D-Man-(1-&gt;6)}-alpha-D-Man-(1-&gt;6)]-beta-D-Man-(1-&gt;4)-beta-D-GlcNAc-(1-&gt;4)-beta-D-GlcNAc}-asparaginyl-[protein] + UDP-N-acetyl-alpha-D-glucosamine = N(4)-{beta-D-GlcNAc-(1-&gt;2)-[beta-D-GlcNAc-(1-&gt;4)]-alpha-D-Man-(1-&gt;3)-[alpha-D-Man-(1-&gt;3)-{alpha-D-Man-(1-&gt;6)}-alpha-D-Man-(1-&gt;6)]-beta-D-Man-(1-&gt;4)-beta-D-GlcNAc-(1-&gt;4)-beta-D-GlcNAc}-asparaginyl-[protein] + UDP + H(+). The enzyme catalyses N(4)-{beta-D-GlcNAc-(1-&gt;2)-alpha-D-Man-(1-&gt;3)-beta-D-Man-(1-&gt;4)-beta-D-GlcNAc-(1-&gt;4)-beta-D-GlcNAc}-asparaginyl-[protein] + UDP-N-acetyl-alpha-D-glucosamine = N(4)-{beta-D-GlcNAc-(1-&gt;2)-[beta-D-GlcNAc-(1-&gt;4)]-alpha-D-Man-(1-&gt;3)-beta-D-Man-(1-&gt;4)-beta-D-GlcNAc-(1-&gt;4)-beta-D-GlcNAc}-asparaginyl-[protein] + UDP + H(+). It functions in the pathway protein modification; protein glycosylation. With respect to regulation, inhibited by UDP. Its function is as follows. Glycosyltransferase that catalyze the transfer of GlcNAc from UDP-GlcNAc to the GlcNAcbeta1-2Manalpha1-3 arm of the core structure of N-linked glycans through a beta1-4 linkage and participates in the production of tri- and tetra-antennary N-linked sugar chains. Involved in glucose transport by mediating SLC2A2/GLUT2 glycosylation, thereby controlling cell-surface expression of SLC2A2 in pancreatic beta cells. The polypeptide is Alpha-1,3-mannosyl-glycoprotein 4-beta-N-acetylglucosaminyltransferase A (Mus musculus (Mouse)).